A 217-amino-acid polypeptide reads, in one-letter code: UPF0502 protein VIBHAR_05349 (217 aa).

This sequence belongs to the UPF0502 family.

The protein is UPF0502 protein VIBHAR_05349 of Vibrio campbellii (strain ATCC BAA-1116).